We begin with the raw amino-acid sequence, 386 residues long: 3-ketoacyl-CoA thiolase (386 aa).

Cysteine 91 (acyl-thioester intermediate) is an active-site residue. Catalysis depends on proton acceptor residues histidine 342 and cysteine 372.

Belongs to the thiolase-like superfamily. Thiolase family. As to quaternary structure, heterotetramer of two alpha chains (FadB) and two beta chains (FadA).

It localises to the cytoplasm. It catalyses the reaction an acyl-CoA + acetyl-CoA = a 3-oxoacyl-CoA + CoA. It functions in the pathway lipid metabolism; fatty acid beta-oxidation. Functionally, catalyzes the final step of fatty acid oxidation in which acetyl-CoA is released and the CoA ester of a fatty acid two carbons shorter is formed. This Pseudoalteromonas atlantica (strain T6c / ATCC BAA-1087) protein is 3-ketoacyl-CoA thiolase.